Consider the following 607-residue polypeptide: MSQPFDASAFLATCSGRPGVYRMFDAEARLLYVGKAKNLKKRLASYFRKTGLAPKTAALVGRIAQVETTITANETEALLLEQTLIKEWRPPYNILLRDDKSYPYVFLSDGEFPRLGIHRGAKKAKGRYFGPYPSAGAIRESLSLLQKAFSVRQCEDSYYANRTRPCLQYQIKRCKGPCVGLVTPEEYAEDVRHSVMFLEGRSQQLGNELNAEMEKAAMALNFEKAAELRDQIALLRRVQDQQYMEGGSGDVDVVAAFVNPGGACVHLISVRGGRVLGSKNFFPQVGIEEEVAEVMAAFLSQYYLGNAERELPGELIVNVVHEDFDAITEAVQTLRGRELSISHRVRGTRARWQQLAVTNAEQALNARLANRQHMAARFEALAQVLDLDEVPQRLECYDISHSSGEATVASCVVFGPEGPLKSDYRRFNIEGVTAGDDYAAMHQALQRRYGRIKDGEGKLPDVLLVDGGKGQLNMARDVMQELGFGDLTLLGVAKGVTRKAGFETLYLNDVAHEFTLKGDSPALHLIQQIRDEAHRFAITGHRARRGKARRTSSLEDVAGVGPKRRRDLLKHFGGLQELNRASIDEIAKAPGISKKLAESIYASLHSE.

Positions 16-94 constitute a GIY-YIG domain; that stretch reads GRPGVYRMFD…IKEWRPPYNI (79 aa). In terms of domain architecture, UVR spans 203-238; the sequence is QQLGNELNAEMEKAAMALNFEKAAELRDQIALLRRV.

The protein belongs to the UvrC family. As to quaternary structure, interacts with UvrB in an incision complex.

It is found in the cytoplasm. In terms of biological role, the UvrABC repair system catalyzes the recognition and processing of DNA lesions. UvrC both incises the 5' and 3' sides of the lesion. The N-terminal half is responsible for the 3' incision and the C-terminal half is responsible for the 5' incision. The sequence is that of UvrABC system protein C from Pseudomonas entomophila (strain L48).